Reading from the N-terminus, the 183-residue chain is Capsid protein (183 aa).

A disordered region spans residues 136–183 (NAPILSTLPETTVVRRRGRSPRRRTPSPRRRRSQSPRRRRSQSRESQC). A compositionally biased stretch (basic residues) spans 149 to 176 (VRRRGRSPRRRTPSPRRRRSQSPRRRRS). A phosphoserine; by host mark is found at Ser-155, Ser-162, and Ser-170. A 1; half-length repeat occupies 155 to 161 (SPRRRTP). The interval 155 to 177 (SPRRRTPSPRRRRSQSPRRRRSQ) is 3 X 8 AA repeats of S-P-R-R-R-[PR]-S-Q. The Bipartite nuclear localization signal motif lies at 158 to 175 (RRTPSPRRRRSQSPRRRR). Tandem repeats lie at residues 162 to 169 (SPRRRRSQ) and 170 to 177 (SPRRRRSQ). The tract at residues 177–183 (QSRESQC) is RNA binding.

The protein belongs to the orthohepadnavirus core antigen family. As to quaternary structure, homodimerizes, then multimerizes. Interacts with cytosol exposed regions of viral L glycoprotein present in the reticulum-to-Golgi compartment. Interacts with human FLNB. Phosphorylated form interacts with host importin alpha; this interaction depends on the exposure of the NLS, which itself depends upon genome maturation and/or phosphorylation of the capsid protein. Interacts with host NUP153. Phosphorylated by host SRPK1, SRPK2, and maybe protein kinase C or GAPDH. Phosphorylation is critical for pregenomic RNA packaging. Protein kinase C phosphorylation is stimulated by HBx protein and may play a role in transport of the viral genome to the nucleus at the late step during the viral replication cycle.

The protein resides in the virion. It is found in the host cytoplasm. Self assembles to form an icosahedral capsid. Most capsids appear to be large particles with an icosahedral symmetry of T=4 and consist of 240 copies of capsid protein, though a fraction forms smaller T=3 particles consisting of 180 capsid proteins. Entering capsids are transported along microtubules to the nucleus. Phosphorylation of the capsid is thought to induce exposure of nuclear localization signal in the C-terminal portion of the capsid protein that allows binding to the nuclear pore complex via the importin (karyopherin-) alpha and beta. Capsids are imported in intact form through the nuclear pore into the nuclear basket, where it probably binds NUP153. Only capsids that contain the mature viral genome can release the viral DNA and capsid protein into the nucleoplasm. Immature capsids get stuck in the basket. Capsids encapsulate the pre-genomic RNA and the P protein. Pre-genomic RNA is reverse-transcribed into DNA while the capsid is still in the cytoplasm. The capsid can then either be directed to the nucleus, providing more genomes for transcription, or bud through the endoplasmic reticulum to provide new virions. The sequence is that of Capsid protein from Homo sapiens (Human).